Here is a 132-residue protein sequence, read N- to C-terminus: UPF0299 membrane protein YohJ (132 aa).

A run of 4 helical transmembrane segments spans residues 8–28 (IWQY…GIFI), 31–51 (LLPV…VLLA), 63–83 (GCYL…VGVM), and 93–113 (FGPV…VVSW).

Belongs to the UPF0299 family.

The protein localises to the cell inner membrane. The chain is UPF0299 membrane protein YohJ from Escherichia fergusonii (strain ATCC 35469 / DSM 13698 / CCUG 18766 / IAM 14443 / JCM 21226 / LMG 7866 / NBRC 102419 / NCTC 12128 / CDC 0568-73).